The sequence spans 299 residues: Fluorinase (299 aa).

Residues Asp16, 21–23 (DDS), Tyr77, Ser158, Asp210, Asn215, 269–270 (SR), and 277–279 (RNA) contribute to the S-adenosyl-L-methionine site.

Homohexamer; dimers of trimer.

It catalyses the reaction fluoride + S-adenosyl-L-methionine = 5'-deoxy-5'-fluoroadenosine + L-methionine. With respect to regulation, competitively inhibited by S-adenosyl-L-homocysteine (AdoHcy) and S-adenosyl-L-homocysteine (SAH). Sinefungin is only weakly inhibitory. Its function is as follows. Involved in the biosynthesis of fluorometabolites. Catalyzes the formation of a C-F bond by combining S-adenosyl-L-methionine (SAM) and fluoride to generate 5'-fluoro-5'-deoxyadenosine (5'-FDA) and L-methionine. It can also use 2'-deoxyadenosine in place of adenosine as substrate. This Streptantibioticus cattleyicolor (Streptomyces cattleya) protein is Fluorinase.